We begin with the raw amino-acid sequence, 353 residues long: Holliday junction branch migration complex subunit RuvB (353 aa).

Positions 1–183 are large ATPase domain (RuvB-L); that stretch reads MSGEGLVSAA…FGFTAHMDFY (183 aa). ATP is bound by residues Leu22, Arg23, Gly64, Lys67, Thr68, Ser69, 130 to 132, Arg173, Tyr183, and Arg220; that span reads EDF. Thr68 contributes to the Mg(2+) binding site. Residues 184 to 254 are small ATPAse domain (RuvB-S); sequence DAAELALVLT…VARAALRIYD (71 aa). The interval 257–353 is head domain (RuvB-H); that stretch reads ALGLDRLDRA…ALFGEDLPAS (97 aa). DNA contacts are provided by Arg312 and Arg317.

It belongs to the RuvB family. In terms of assembly, homohexamer. Forms an RuvA(8)-RuvB(12)-Holliday junction (HJ) complex. HJ DNA is sandwiched between 2 RuvA tetramers; dsDNA enters through RuvA and exits via RuvB. An RuvB hexamer assembles on each DNA strand where it exits the tetramer. Each RuvB hexamer is contacted by two RuvA subunits (via domain III) on 2 adjacent RuvB subunits; this complex drives branch migration. In the full resolvosome a probable DNA-RuvA(4)-RuvB(12)-RuvC(2) complex forms which resolves the HJ.

It is found in the cytoplasm. The enzyme catalyses ATP + H2O = ADP + phosphate + H(+). The RuvA-RuvB-RuvC complex processes Holliday junction (HJ) DNA during genetic recombination and DNA repair, while the RuvA-RuvB complex plays an important role in the rescue of blocked DNA replication forks via replication fork reversal (RFR). RuvA specifically binds to HJ cruciform DNA, conferring on it an open structure. The RuvB hexamer acts as an ATP-dependent pump, pulling dsDNA into and through the RuvAB complex. RuvB forms 2 homohexamers on either side of HJ DNA bound by 1 or 2 RuvA tetramers; 4 subunits per hexamer contact DNA at a time. Coordinated motions by a converter formed by DNA-disengaged RuvB subunits stimulates ATP hydrolysis and nucleotide exchange. Immobilization of the converter enables RuvB to convert the ATP-contained energy into a lever motion, pulling 2 nucleotides of DNA out of the RuvA tetramer per ATP hydrolyzed, thus driving DNA branch migration. The RuvB motors rotate together with the DNA substrate, which together with the progressing nucleotide cycle form the mechanistic basis for DNA recombination by continuous HJ branch migration. Branch migration allows RuvC to scan DNA until it finds its consensus sequence, where it cleaves and resolves cruciform DNA. The polypeptide is Holliday junction branch migration complex subunit RuvB (Parafrankia sp. (strain EAN1pec)).